The chain runs to 392 residues: Phosphopentomutase (392 aa).

6 residues coordinate Mn(2+): D10, D282, H287, D323, H324, and H335.

This sequence belongs to the phosphopentomutase family. Mn(2+) serves as cofactor.

Its subcellular location is the cytoplasm. It catalyses the reaction 2-deoxy-alpha-D-ribose 1-phosphate = 2-deoxy-D-ribose 5-phosphate. It carries out the reaction alpha-D-ribose 1-phosphate = D-ribose 5-phosphate. The protein operates within carbohydrate degradation; 2-deoxy-D-ribose 1-phosphate degradation; D-glyceraldehyde 3-phosphate and acetaldehyde from 2-deoxy-alpha-D-ribose 1-phosphate: step 1/2. In terms of biological role, isomerase that catalyzes the conversion of deoxy-ribose 1-phosphate (dRib-1-P) and ribose 1-phosphate (Rib-1-P) to deoxy-ribose 5-phosphate (dRib-5-P) and ribose 5-phosphate (Rib-5-P), respectively. This is Phosphopentomutase from Dictyoglomus thermophilum (strain ATCC 35947 / DSM 3960 / H-6-12).